Here is a 484-residue protein sequence, read N- to C-terminus: Pre-glycoprotein polyprotein GP complex (484 aa).

Gly2 carries N-myristoyl glycine; by host lipidation. Topologically, residues 2 to 17 (GQLVSFFQEIPNIIQE) are extracellular. A helical transmembrane segment spans residues 18-33 (AINIALIAVSLIAILK). At 34–58 (GLVNLWKSGLFQLLVFLILAGRSCS) the chain is on the cytoplasmic side. Cys57 lines the Zn(2+) pocket. At 59–423 (FKIGRSTELQ…QGKTPITLVD (365 aa)) the chain is on the extracellular side. Cystine bridges form between Cys85-Cys225, Cys270-Cys283, Cys292-Cys301, and Cys355-Cys376. N-linked (GlcNAc...) asparagine; by host glycosylation is found at Asn88, Asn125, Asn178, and Asn218. 4 N-linked (GlcNAc...) asparagine; by host glycosylation sites follow: Asn356, Asn364, Asn381, and Asn386. A helical membrane pass occupies residues 424 to 444 (ICFWSTLFFTTTLFLHLVGFP). The Cytoplasmic segment spans residues 445 to 484 (THRHIQGEPCPLPHKLNSNGGCRCGRYPELKKPTTWHRKH). Positions 446, 448, 454, 458, 466, 468, and 484 each coordinate Zn(2+).

The protein belongs to the arenaviridae GPC protein family. In terms of assembly, interacts with glycoprotein G2. Part of the GP complex (GP-C) together with glycoprotein G1 and glycoprotein G2. The GP-complex interacts with protein Z, which interacts with ribonucleocapsid; these interactions may induce virion budding. As to quaternary structure, homotrimer; disulfide-linked. In pre-fusion state, G1 homotrimers bind G2 homotrimers via ionic interactions. Part of the GP complex (GP-C) together with glycoprotein G2 and the stable signal peptide. The GP-complex interacts with protein Z, which interacts with ribonucleocapsid; these interactions may induce virion budding. Homotrimer. Interacts with the stable signal peptide. In pre-fusion state, G2 homotrimers bind G1 homotrimers via ionic interactions. Part of the GP complex (GP-C) together with glycoprotein G1 and the stable signal peptide. Acidification in the endosome triggers rearrangements, which ultimately leads to a 6 helix bundle formed by the two heptad repeat domains (HR1 and HR2) in post-fusion state. The GP-complex interacts with protein Z, which interacts with ribonucleocapsid; these interactions may induce virion budding. Post-translationally, specific enzymatic cleavages in vivo yield mature proteins. GP-C polyprotein is cleaved in the endoplasmic reticulum by the host protease MBTPS1. Only cleaved glycoprotein is incorporated into virions. In terms of processing, the SSP remains stably associated with the GP complex following cleavage by signal peptidase and plays crucial roles in the trafficking of GP through the secretory pathway. Myristoylation is necessary for GP2-mediated fusion activity.

The protein localises to the virion membrane. Its subcellular location is the host endoplasmic reticulum membrane. The protein resides in the host Golgi apparatus membrane. It is found in the host cell membrane. Its function is as follows. Functions as a cleaved signal peptide that is retained as the third component of the GP complex (GP-C). Helps to stabilize the spike complex in its native conformation. The SSP is required for efficient glycoprotein expression, post-translational maturation cleavage of G1 and G2, glycoprotein transport to the cell surface plasma membrane, formation of infectious virus particles, and acid pH-dependent glycoprotein-mediated cell fusion. In terms of biological role, glycoprotein G1: Forms the virion spikes together with glycoprotein G2. The glycoprotein spike trimers are connected to the underlying matrix. Interacts with the host receptor leading to virus endocytosis. Forms the virion spikes together with glycoprotein G1. The glycoprotein spike trimers are connected to the underlying matrix. Class I viral fusion protein that directs fusion of viral and host endosomal membranes, leading to delivery of the nucleocapsid into the cytoplasm. Membrane fusion is mediated by irreversible conformational changes induced by acidification. The polypeptide is Pre-glycoprotein polyprotein GP complex (Chapare mammarenavirus (isolate Human/Bolivia/810419/2003)).